Consider the following 599-residue polypeptide: Adenine deaminase (599 aa).

This sequence belongs to the metallo-dependent hydrolases superfamily. Adenine deaminase family. The cofactor is Mn(2+).

The enzyme catalyses adenine + H2O + H(+) = hypoxanthine + NH4(+). The polypeptide is Adenine deaminase (Clostridium botulinum (strain Langeland / NCTC 10281 / Type F)).